The sequence spans 280 residues: Small ribosomal subunit protein uS3 (280 aa).

One can recognise a KH type-2 domain in the interval 38-106 (IRRLLSTGLE…QVQLNILEVR (69 aa)). Positions 215 to 280 (AAAAPAGAER…PAAEPQSTES (66 aa)) are disordered. Residues 238-280 (SGASGTTATGTEAGRAAASADESTAAGQPAEAAPAAEPQSTES) show a composition bias toward low complexity.

Belongs to the universal ribosomal protein uS3 family. Part of the 30S ribosomal subunit. Forms a tight complex with proteins S10 and S14.

Binds the lower part of the 30S subunit head. Binds mRNA in the 70S ribosome, positioning it for translation. The chain is Small ribosomal subunit protein uS3 from Mycobacterium avium (strain 104).